Here is a 449-residue protein sequence, read N- to C-terminus: Adenylosuccinate synthetase (449 aa).

GTP-binding positions include 12–18 (GDEGKGK) and 40–42 (GHT). D13 functions as the Proton acceptor in the catalytic mechanism. 2 residues coordinate Mg(2+): D13 and G40. IMP-binding positions include 13–16 (DEGK), 38–41 (NAGH), T128, R142, Q223, T238, and R302. Catalysis depends on H41, which acts as the Proton donor. 298–304 (TTTGRQR) serves as a coordination point for substrate. GTP-binding positions include R304, 330–332 (KLD), and 412–414 (SLG).

The protein belongs to the adenylosuccinate synthetase family. In terms of assembly, homodimer. Requires Mg(2+) as cofactor.

It localises to the cytoplasm. The enzyme catalyses IMP + L-aspartate + GTP = N(6)-(1,2-dicarboxyethyl)-AMP + GDP + phosphate + 2 H(+). It participates in purine metabolism; AMP biosynthesis via de novo pathway; AMP from IMP: step 1/2. Its function is as follows. Plays an important role in the de novo pathway of purine nucleotide biosynthesis. Catalyzes the first committed step in the biosynthesis of AMP from IMP. The chain is Adenylosuccinate synthetase from Synechococcus sp. (strain JA-2-3B'a(2-13)) (Cyanobacteria bacterium Yellowstone B-Prime).